A 238-amino-acid polypeptide reads, in one-letter code: Ribonuclease PH (238 aa).

Phosphate-binding positions include arginine 86 and 124–126 (GTR).

The protein belongs to the RNase PH family. Homohexameric ring arranged as a trimer of dimers.

It catalyses the reaction tRNA(n+1) + phosphate = tRNA(n) + a ribonucleoside 5'-diphosphate. Phosphorolytic 3'-5' exoribonuclease that plays an important role in tRNA 3'-end maturation. Removes nucleotide residues following the 3'-CCA terminus of tRNAs; can also add nucleotides to the ends of RNA molecules by using nucleoside diphosphates as substrates, but this may not be physiologically important. Probably plays a role in initiation of 16S rRNA degradation (leading to ribosome degradation) during starvation. This Photobacterium profundum (strain SS9) protein is Ribonuclease PH.